Reading from the N-terminus, the 271-residue chain is Shikimate dehydrogenase (NADP(+)) (271 aa).

Shikimate contacts are provided by residues 14-16 and T61; that span reads SLS. K65 functions as the Proton acceptor in the catalytic mechanism. Residues N86 and D101 each coordinate shikimate. NADP(+) contacts are provided by residues 125 to 129 and I212; that span reads GAGGA. Residue Y214 participates in shikimate binding. Residue G235 participates in NADP(+) binding.

The protein belongs to the shikimate dehydrogenase family. In terms of assembly, homodimer.

It carries out the reaction shikimate + NADP(+) = 3-dehydroshikimate + NADPH + H(+). Its pathway is metabolic intermediate biosynthesis; chorismate biosynthesis; chorismate from D-erythrose 4-phosphate and phosphoenolpyruvate: step 4/7. In terms of biological role, involved in the biosynthesis of the chorismate, which leads to the biosynthesis of aromatic amino acids. Catalyzes the reversible NADPH linked reduction of 3-dehydroshikimate (DHSA) to yield shikimate (SA). This Clostridium perfringens (strain ATCC 13124 / DSM 756 / JCM 1290 / NCIMB 6125 / NCTC 8237 / Type A) protein is Shikimate dehydrogenase (NADP(+)).